Consider the following 231-residue polypeptide: Ion-translocating oxidoreductase complex subunit E (231 aa).

Helical transmembrane passes span 18-38 (ALVQ…ATNA), 39-59 (LGLG…ISTL), 63-83 (TPAE…VSAV), 86-106 (LINA…PLIV), 125-145 (ALSA…MCVL), and 182-202 (PFLL…MLAG).

It belongs to the NqrDE/RnfAE family. As to quaternary structure, the complex is composed of six subunits: RsxA, RsxB, RsxC, RsxD, RsxE and RsxG.

The protein resides in the cell inner membrane. Its function is as follows. Part of a membrane-bound complex that couples electron transfer with translocation of ions across the membrane. Required to maintain the reduced state of SoxR. In Escherichia coli (strain SMS-3-5 / SECEC), this protein is Ion-translocating oxidoreductase complex subunit E.